A 207-amino-acid chain; its full sequence is Nodulation protein S (207 aa).

The protein belongs to the NodS family.

Functionally, SAM-utilizing methyltransferase involved in nod factor synthesis. The polypeptide is Nodulation protein S (nodS) (Azorhizobium caulinodans (strain ATCC 43989 / DSM 5975 / JCM 20966 / LMG 6465 / NBRC 14845 / NCIMB 13405 / ORS 571)).